Consider the following 3712-residue polypeptide: Laminin subunit alpha (3712 aa).

The N-terminal stretch at 1-22 (MGHGVASIGALLVILAISYCQA) is a signal peptide. One can recognise a Laminin N-terminal domain in the interval 23-272 (ELTPPYFNLA…SIKDISIGGR (250 aa)). 2 N-linked (GlcNAc...) asparagine glycosylation sites follow: N116 and N219. 43 disulfides stabilise this stretch: C273-C282, C275-C296, C298-C307, C310-C330, C333-C342, C335-C367, C370-C379, C382-C400, C403-C414, C405-C421, C423-C432, C435-C445, C448-C460, C450-C468, C470-C479, C482-C492, C495-C507, C497-C514, C516-C525, C528-C538, C541-C553, C543-C560, C562-C571, C574-C584, C587-C599, C589-C605, C607-C616, C619-C629, C632-C644, C634-C650, C652-C661, C664-C674, C677-C691, C679-C700, C702-C711, C714-C729, C732-C746, C734-C753, C755-C764, C767-C782, C785-C797, C787-C804, and C806-C815. 10 Laminin EGF-like domains span residues 273-332 (CMCN…NCEP), 333-402 (CNCH…VCSP), 403-447 (CQCD…NCRE), 448-494 (CECN…ECKA), 495-540 (CECN…TCSY), 541-586 (CDCD…DCKP), 587-631 (CNCS…DCLP), 632-676 (CHCD…SCED), 677-731 (CNCD…GCEI), and 732-784 (CDCW…GCKD). N-linked (GlcNAc...) asparagine glycosylation is present at N395. N-linked (GlcNAc...) asparagine glycosylation occurs at N453. N508 carries N-linked (GlcNAc...) asparagine glycosylation. N-linked (GlcNAc...) asparagine glycosylation is present at N588. The N-linked (GlcNAc...) asparagine glycan is linked to N722. In terms of domain architecture, Laminin EGF-like 11; truncated spans 785–815 (CSCDVGGSWQSVCDKISGQCKCHPRITGLAC). The interval 816-1374 (TQPLTTHFFP…TADYNSGALP (559 aa)) is domain IV''. N-linked (GlcNAc...) asparagine glycosylation is found at N897 and N1352. Disulfide bonds link C1375–C1387, C1377–C1394, C1396–C1405, C1408–C1418, C1421–C1429, C1423–C1436, C1438–C1447, C1450–C1463, C1466–C1480, C1468–C1487, C1489–C1498, C1501–C1511, C1514–C1526, C1516–C1533, C1535–C1544, and C1547–C1562. Laminin EGF-like domains lie at 1375-1420 (CNCD…DCKP), 1421-1465 (CKCP…GCEE), 1466-1513 (CACN…HCEQ), and 1514-1564 (CSCH…GCTT). N1484 carries N-linked (GlcNAc...) asparagine glycosylation. A Laminin EGF-like 16; first part domain is found at 1565–1574 (CFCFGKTSRC). N-linked (GlcNAc...) asparagine glycosylation is found at N1583 and N1617. The Laminin IV type A domain maps to 1585–1775 (SLLKHVSITT…GEYQFLAVER (191 aa)). Positions 1776–1808 (CSCPPGYSGHSCEDCAPGYYRDPSGPYGGYCIP) constitute a Laminin EGF-like 16; second part domain. Cystine bridges form between C1778–C1787, C1790–C1806, C1809–C1818, C1811–C1825, C1828–C1837, C1840–C1856, C1859–C1874, C1861–C1885, C1887–C1896, C1899–C1914, C1917–C1931, C1919–C1938, C1941–C1950, C1953–C1967, C1970–C1980, C1972–C1987, C1989–C1998, C2001–C2014, C2017–C2028, C2019–C2035, C2037–C2046, C2049–C2061, C2064–C2076, C2066–C2083, C2085–C2094, and C2097–C2109. Laminin EGF-like domains are found at residues 1809–1858 (CECN…DCMI), 1859–1916 (CACP…VCKP), 1917–1969 (CECS…NCQS), 1970–2016 (CDCD…GCRA), 2017–2063 (CDCG…GCTP), and 2064–2111 (CNCN…GCQE). N1847 carries N-linked (GlcNAc...) asparagine glycosylation. N-linked (GlcNAc...) asparagine glycosylation occurs at N1943. N-linked (GlcNAc...) asparagine glycosylation occurs at N2024. The tract at residues 2112 to 2671 (CNNCHHALLD…EAARQLANSI (560 aa)) is domain II and I. A coiled-coil region spans residues 2178 to 2249 (KKANSELESD…LSKNLEAAAS (72 aa)). Residues N2196, N2215, N2267, N2301, and N2323 are each glycosylated (N-linked (GlcNAc...) asparagine). A coiled-coil region spans residues 2301–2321 (NKSLNALKNDIGEFSDHLEDL). Residues 2376 to 2450 (DLTLNQINQK…QYTDMTASAE (75 aa)) are a coiled coil. N-linked (GlcNAc...) asparagine glycans are attached at residues N2482, N2524, N2538, N2569, N2699, N2720, N2890, N2938, and N3010. Residues 2541–2676 (EHQLKDINKL…LANSIKVGVN (136 aa)) are a coiled coil. 3 consecutive Laminin G-like domains span residues 2672–2868 (KVGV…ERDV), 2876–3048 (VTGL…EEGC), and 3055–3223 (VVSY…INGC). Residues C3022 and C3048 are joined by a disulfide bond. Residue N3070 is glycosylated (N-linked (GlcNAc...) asparagine). An intrachain disulfide couples C3196 to C3223. The interval 3244-3297 (NEVESPWSNADTLPPLKPDIESTLPPTTPTTTTTTTTTTTSTTTTSTTTTTTTP) is disordered. The span at 3265–3297 (STLPPTTPTTTTTTTTTTTSTTTTSTTTTTTTP) shows a compositional bias: low complexity. Laminin G-like domains are found at residues 3349–3528 (GYRF…VVPC) and 3534–3709 (RGLF…QGYC). N3491 carries an N-linked (GlcNAc...) asparagine glycan. Cysteines 3505 and 3528 form a disulfide. N3612 carries N-linked (GlcNAc...) asparagine glycosylation. The cysteines at positions 3682 and 3709 are disulfide-linked.

As to quaternary structure, laminin is a complex glycoprotein, consisting of three different polypeptide chains (alpha, beta, gamma), which are bound to each other by disulfide bonds into a cross-shaped molecule comprising one long and three short arms with globules at each end. Newly formed mesoderm and later prominently expressed in hemocytes, which also synthesize collagen IV. Expressed in muscles.

Its subcellular location is the secreted. The protein resides in the extracellular space. It localises to the extracellular matrix. It is found in the basement membrane. The protein localises to the synapse. Its subcellular location is the cell projection. The protein resides in the axon. It localises to the cytoplasmic vesicle. It is found in the secretory vesicle. The protein localises to the synaptic vesicle. Its function is as follows. Binding to cells via a high affinity receptor, laminin is thought to mediate the attachment, migration and organization of cells into tissues during embryonic development by interacting with other extracellular matrix components. Activates presynaptic signaling involving integrin alpha-PS3/beta-nu and Fak to suppress neuromuscular junction (NMJ) growth during larval development and during low crawling activity, but not during higher-crawling conditions. Mediates, together with integrin alpha-PS3/beta-nu, glutamate receptor-modulated NMJ growth. The polypeptide is Laminin subunit alpha (LanA) (Drosophila melanogaster (Fruit fly)).